Here is an 828-residue protein sequence, read N- to C-terminus: Beta-galactosidase 13 (828 aa).

Residues 1-23 (MKTTMAAAATCLVALLVVVLAEA) form the signal peptide. N-linked (GlcNAc...) asparagine glycosylation is present at N157. The Proton donor role is filled by E187. N-linked (GlcNAc...) asparagine glycans are attached at residues N198 and N249. E259 acts as the Nucleophile in catalysis. 8 N-linked (GlcNAc...) asparagine glycosylation sites follow: N260, N362, N366, N392, N502, N578, N586, and N615. The SUEL-type lectin domain occupies 746–828 (AEVGDAITLS…SGVLTVQASC (83 aa)).

It belongs to the glycosyl hydrolase 35 family.

It is found in the secreted. The protein localises to the extracellular space. Its subcellular location is the apoplast. The enzyme catalyses Hydrolysis of terminal non-reducing beta-D-galactose residues in beta-D-galactosides.. This is Beta-galactosidase 13 from Oryza sativa subsp. japonica (Rice).